We begin with the raw amino-acid sequence, 330 residues long: Type II methyltransferase M.MthTI (330 aa).

The SAM-dependent MTase C5-type domain maps to 3–328; it reads MDIASFFSGA…KKIKKDLEGV (326 aa). Cys-73 is an active-site residue.

This sequence belongs to the class I-like SAM-binding methyltransferase superfamily. C5-methyltransferase family.

It catalyses the reaction a 2'-deoxycytidine in DNA + S-adenosyl-L-methionine = a 5-methyl-2'-deoxycytidine in DNA + S-adenosyl-L-homocysteine + H(+). Functionally, a methylase that recognizes the double-stranded sequence 5'-GGCC-3', methylates C-3 on both strands, and protects the DNA from cleavage by the MthTI endonuclease. The protein is Type II methyltransferase M.MthTI (mthTIM) of Methanothermobacter thermautotrophicus (Methanobacterium thermoformicicum).